A 397-amino-acid polypeptide reads, in one-letter code: 2,3-bisphosphoglycerate-independent phosphoglycerate mutase (397 aa).

It belongs to the BPG-independent phosphoglycerate mutase family. A-PGAM subfamily.

It carries out the reaction (2R)-2-phosphoglycerate = (2R)-3-phosphoglycerate. It participates in carbohydrate degradation; glycolysis; pyruvate from D-glyceraldehyde 3-phosphate: step 3/5. Catalyzes the interconversion of 2-phosphoglycerate and 3-phosphoglycerate. The sequence is that of 2,3-bisphosphoglycerate-independent phosphoglycerate mutase (apgM) from Methanosarcina mazei (strain ATCC BAA-159 / DSM 3647 / Goe1 / Go1 / JCM 11833 / OCM 88) (Methanosarcina frisia).